A 67-amino-acid chain; its full sequence is ATP synthase protein 8 (67 aa).

A helical transmembrane segment spans residues 8-24 (TWFITITSMTITLFIMF). N6-acetyllysine; alternate is present on K54. Position 54 is an N6-succinyllysine; alternate (K54). K57 bears the N6-acetyllysine mark.

Belongs to the ATPase protein 8 family. In terms of assembly, F-type ATPases have 2 components, CF(1) - the catalytic core - and CF(0) - the membrane proton channel. Component of an ATP synthase complex composed of ATP5PB, ATP5MC1, ATP5F1E, ATP5PD, ATP5ME, ATP5PF, ATP5MF, MT-ATP6, MT-ATP8, ATP5F1A, ATP5F1B, ATP5F1D, ATP5F1C, ATP5PO, ATP5MG, ATP5MK and ATP5MJ. Interacts with PRICKLE3.

Its subcellular location is the mitochondrion membrane. Functionally, mitochondrial membrane ATP synthase (F(1)F(0) ATP synthase or Complex V) produces ATP from ADP in the presence of a proton gradient across the membrane which is generated by electron transport complexes of the respiratory chain. F-type ATPases consist of two structural domains, F(1) - containing the extramembraneous catalytic core and F(0) - containing the membrane proton channel, linked together by a central stalk and a peripheral stalk. During catalysis, ATP synthesis in the catalytic domain of F(1) is coupled via a rotary mechanism of the central stalk subunits to proton translocation. Part of the complex F(0) domain. Minor subunit located with subunit a in the membrane. The polypeptide is ATP synthase protein 8 (MT-ATP8) (Rhinoceros unicornis (Greater Indian rhinoceros)).